The following is a 526-amino-acid chain: Thymocyte selection-associated high mobility group box protein TOX (526 aa).

Disordered regions lie at residues 138–178 (MPDI…PHGQ) and 192–264 (GLNM…PQKP). Polar residues predominate over residues 192–203 (GLNMGGSNVPHN). The segment covering 209–220 (GSKSATPSPSSS) has biased composition (low complexity). The span at 228–245 (DTSKINGGEKRPASDMGK) shows a compositional bias: basic and acidic residues. A Nuclear localization signal motif is present at residues 237–256 (KRPASDMGKKPKTPKKKKKK). Over residues 246–256 (KPKTPKKKKKK) the composition is skewed to basic residues. A DNA-binding region (HMG box) is located at residues 261–329 (PQKPVSAYAL…EYLKQLAAYR (69 aa)).

The protein belongs to the high motility group (HMG) box superfamily. In terms of assembly, interacts with HBO1 complex composed at least of KAT7/HBO1, ING4, MEAF6, and JADE2; this complex is involved in histone acetylation. Interacts with DNMT1, LEO1, PAF1, SAP130 and SIN3A; these interactors regulate chromatin remodeling. Interacts with an array of proteins involved in RNA processing and translation and DNA replication. Expressed in NK cells. Highly expressed in tumor-infiltrating CD8-positive T cells (at protein level).

The protein resides in the nucleus. Transcriptional regulator with a major role in neural stem cell commitment and corticogenesis as well as in lymphoid cell development and lymphoid tissue organogenesis. Binds to GC-rich DNA sequences in the proximity of transcription start sites and may alter chromatin structure, modifying access of transcription factors to DNA. During cortical development, controls the neural stem cell pool by inhibiting the switch from proliferative to differentiating progenitors. Beyond progenitor cells, promotes neurite outgrowth in newborn neurons migrating to reach the cortical plate. May activate or repress critical genes for neural stem cell fate such as SOX2, EOMES and ROBO2. Plays an essential role in the development of lymphoid tissue-inducer (LTi) cells, a subset necessary for the formation of secondary lymphoid organs: peripheral lymph nodes and Peyer's patches. Acts as a developmental checkpoint and regulates thymocyte positive selection toward T cell lineage commitment. Required for the development of various T cell subsets, including CD4-positive helper T cells, CD8-positive cytotoxic T cells, regulatory T cells and CD1D-dependent natural killer T (NKT) cells. Required for the differentiation of common lymphoid progenitors (CMP) to innate lymphoid cells (ILC). May regulate the NOTCH-mediated gene program, promoting differentiation of the ILC lineage. Required at the progenitor phase of NK cell development in the bone marrow to specify NK cell lineage commitment. Upon chronic antigen stimulation, diverts T cell development by promoting the generation of exhaustive T cells, while suppressing effector and memory T cell programming. May regulate the expression of genes encoding inhibitory receptors such as PDCD1 and induce the exhaustion program, to prevent the overstimulation of T cells and activation-induced cell death. This Homo sapiens (Human) protein is Thymocyte selection-associated high mobility group box protein TOX.